Here is a 149-residue protein sequence, read N- to C-terminus: Pleckstrin homology domain-containing family J member 1 (149 aa).

The PH domain maps to 15 to 108 (RAEKAAELGM…WVEALTNASY (94 aa)).

This is Pleckstrin homology domain-containing family J member 1 (plekhj1) from Xenopus laevis (African clawed frog).